The following is a 158-amino-acid chain: Transcription elongation factor GreA (158 aa).

This sequence belongs to the GreA/GreB family.

Necessary for efficient RNA polymerase transcription elongation past template-encoded arresting sites. The arresting sites in DNA have the property of trapping a certain fraction of elongating RNA polymerases that pass through, resulting in locked ternary complexes. Cleavage of the nascent transcript by cleavage factors such as GreA or GreB allows the resumption of elongation from the new 3'terminus. GreA releases sequences of 2 to 3 nucleotides. This is Transcription elongation factor GreA from Wigglesworthia glossinidia brevipalpis.